Consider the following 300-residue polypeptide: tRNA dimethylallyltransferase (300 aa).

Residue Gly-11 to Ser-18 coordinates ATP. Thr-13 to Ser-18 is a binding site for substrate. The segment at Asp-35 to Gln-38 is interaction with substrate tRNA.

The protein belongs to the IPP transferase family. In terms of assembly, monomer. The cofactor is Mg(2+).

It catalyses the reaction adenosine(37) in tRNA + dimethylallyl diphosphate = N(6)-dimethylallyladenosine(37) in tRNA + diphosphate. Its function is as follows. Catalyzes the transfer of a dimethylallyl group onto the adenine at position 37 in tRNAs that read codons beginning with uridine, leading to the formation of N6-(dimethylallyl)adenosine (i(6)A). The chain is tRNA dimethylallyltransferase from Borrelia duttonii (strain Ly).